Here is a 462-residue protein sequence, read N- to C-terminus: Glycine--tRNA ligase (462 aa).

Residues Arg-100 and Glu-174 each coordinate substrate. ATP-binding positions include 206–208 (RNE), 216–221 (FRTREF), 290–291 (EL), and 334–337 (GVDR). 221-225 (FEQME) is a binding site for substrate. Residue 330 to 334 (EPSVG) coordinates substrate.

Belongs to the class-II aminoacyl-tRNA synthetase family. As to quaternary structure, homodimer.

The protein resides in the cytoplasm. The enzyme catalyses tRNA(Gly) + glycine + ATP = glycyl-tRNA(Gly) + AMP + diphosphate. Catalyzes the attachment of glycine to tRNA(Gly). This Alkaliphilus oremlandii (strain OhILAs) (Clostridium oremlandii (strain OhILAs)) protein is Glycine--tRNA ligase.